The sequence spans 120 residues: MNNFNYFNGKMVEDILENPDEDILNPDKSKTKDIVIKEDFCGACLALPLAFAGAGTATATSGDTSGNKSKSSIFFWSVVISIIGLIATVWFLSGDCTTCVSEGNSRGKRTGSMVCSSTRR.

2 helical membrane-spanning segments follow: residues 40–60 (FCGACLALPLAFAGAGTATAT) and 72–92 (SIFFWSVVISIIGLIATVWFL).

It belongs to the IIV-6 010R family.

It localises to the membrane. In Invertebrate iridescent virus 6 (IIV-6), this protein is Transmembrane protein 010R.